The sequence spans 264 residues: Glutamate racemase (264 aa).

Substrate contacts are provided by residues Asp10–Ser11 and Tyr42–Gly43. Cys73 acts as the Proton donor/acceptor in catalysis. A substrate-binding site is contributed by Asn74 to Thr75. Cys183 serves as the catalytic Proton donor/acceptor. Thr184–His185 is a binding site for substrate.

Belongs to the aspartate/glutamate racemases family.

It carries out the reaction L-glutamate = D-glutamate. It participates in cell wall biogenesis; peptidoglycan biosynthesis. Provides the (R)-glutamate required for cell wall biosynthesis. This chain is Glutamate racemase, found in Streptococcus suis (strain 98HAH33).